We begin with the raw amino-acid sequence, 540 residues long: Light-independent protochlorophyllide reductase subunit B (540 aa).

Residue Asp-36 coordinates [4Fe-4S] cluster. The active-site Proton donor is Asp-292. 428-429 (GL) serves as a coordination point for substrate. Residues 451-490 (SNVASGVEPSTPSVSSEVSASSSASPEASAPTPSPDGDMV) form a disordered region. Positions 457-481 (VEPSTPSVSSEVSASSSASPEASAP) are enriched in low complexity.

The protein belongs to the ChlB/BchB/BchZ family. In terms of assembly, protochlorophyllide reductase is composed of three subunits; BchL, BchN and BchB. Forms a heterotetramer of two BchB and two BchN subunits. It depends on [4Fe-4S] cluster as a cofactor.

It carries out the reaction chlorophyllide a + oxidized 2[4Fe-4S]-[ferredoxin] + 2 ADP + 2 phosphate = protochlorophyllide a + reduced 2[4Fe-4S]-[ferredoxin] + 2 ATP + 2 H2O. The protein operates within porphyrin-containing compound metabolism; bacteriochlorophyll biosynthesis (light-independent). Functionally, component of the dark-operative protochlorophyllide reductase (DPOR) that uses Mg-ATP and reduced ferredoxin to reduce ring D of protochlorophyllide (Pchlide) to form chlorophyllide a (Chlide). This reaction is light-independent. The NB-protein (BchN-BchB) is the catalytic component of the complex. The polypeptide is Light-independent protochlorophyllide reductase subunit B (Chlorobium chlorochromatii (strain CaD3)).